The chain runs to 281 residues: Endochitinase B (281 aa).

A signal peptide spans 1–33; that stretch reads MAMAKAGAPRVSAAQLVTLGLSLLCAVAGPAAA. One can recognise a Chitin-binding type-1 domain in the interval 34 to 68; that stretch reads QNCGCQPNVCCSKFGYCGTTDEYCGDGCQSGPCRS. 4 cysteine pairs are disulfide-bonded: C36–C44, C38–C50, C43–C57, and C61–C66. Residues 69–78 are hinge region (Gly-rich); that stretch reads GGGGSSGGGG. Residues 79 to 281 are catalytic; it reads ANVASVVTGS…GVDPGPNLTC (203 aa). An intrachain disulfide couples C101 to C150. E145 serves as the catalytic Proton donor. An N-linked (GlcNAc...) asparagine glycan is attached at N156. Intrachain disulfides connect C162-C171 and C249-C281. N278 carries N-linked (GlcNAc...) asparagine glycosylation.

This sequence belongs to the glycosyl hydrolase 19 family. Chitinase class I subfamily.

It is found in the secreted. It catalyses the reaction Random endo-hydrolysis of N-acetyl-beta-D-glucosaminide (1-&gt;4)-beta-linkages in chitin and chitodextrins.. Its function is as follows. Defense against chitin-containing fungal pathogens. Its action is countered by fungal polyglycine hydrolases, that cleaves within its hinge region (Gly-rich) to disrupt chitin-binding. In Zea mays (Maize), this protein is Endochitinase B.